The primary structure comprises 146 residues: 3-dehydroquinate dehydratase (146 aa).

Tyrosine 24 functions as the Proton acceptor in the catalytic mechanism. Substrate is bound by residues asparagine 73, histidine 79, and aspartate 86. Histidine 99 functions as the Proton donor in the catalytic mechanism. Substrate is bound by residues 100 to 101 and arginine 110; that span reads LS.

It belongs to the type-II 3-dehydroquinase family. Homododecamer.

It carries out the reaction 3-dehydroquinate = 3-dehydroshikimate + H2O. Its pathway is metabolic intermediate biosynthesis; chorismate biosynthesis; chorismate from D-erythrose 4-phosphate and phosphoenolpyruvate: step 3/7. Its function is as follows. Catalyzes a trans-dehydration via an enolate intermediate. The polypeptide is 3-dehydroquinate dehydratase (Shewanella oneidensis (strain ATCC 700550 / JCM 31522 / CIP 106686 / LMG 19005 / NCIMB 14063 / MR-1)).